The following is a 141-amino-acid chain: MAKKVVDQFKLQIPAGKANPSPPVGPALGQRGVNIMEFCKAFNEKTKDMMGFNIPVVITVYSDRSFTFVTKQPPATDLIKKAAGIQKGSDNPLKNKVGKITQAQLEEIAKTKMPDLNTTDLEAAKRIIAGSCRSMGVEIVD.

Belongs to the universal ribosomal protein uL11 family. Part of the ribosomal stalk of the 50S ribosomal subunit. Interacts with L10 and the large rRNA to form the base of the stalk. L10 forms an elongated spine to which L12 dimers bind in a sequential fashion forming a multimeric L10(L12)X complex. One or more lysine residues are methylated.

Its function is as follows. Forms part of the ribosomal stalk which helps the ribosome interact with GTP-bound translation factors. In Nitratiruptor sp. (strain SB155-2), this protein is Large ribosomal subunit protein uL11.